Consider the following 447-residue polypeptide: Na(+)-translocating NADH-quinone reductase subunit A (447 aa).

It belongs to the NqrA family. As to quaternary structure, composed of six subunits; NqrA, NqrB, NqrC, NqrD, NqrE and NqrF.

The catalysed reaction is a ubiquinone + n Na(+)(in) + NADH + H(+) = a ubiquinol + n Na(+)(out) + NAD(+). NQR complex catalyzes the reduction of ubiquinone-1 to ubiquinol by two successive reactions, coupled with the transport of Na(+) ions from the cytoplasm to the periplasm. NqrA to NqrE are probably involved in the second step, the conversion of ubisemiquinone to ubiquinol. In Klebsiella pneumoniae (strain 342), this protein is Na(+)-translocating NADH-quinone reductase subunit A.